The following is a 506-amino-acid chain: Plant intracellular Ras-group-related LRR protein 1 (506 aa).

Residues 24–48 form a disordered region; it reads TAKSSSSSDVEPPPSKSDPSSSSNH. Positions 143–193 form a coiled coil; sequence KSILKLNELHESYEKLLKEAEERLVRIYESAEKNAAAVAEEEAAEVEVNEE. 10 LRR repeats span residues 203 to 225, 226 to 249, 251 to 272, 273 to 295, 297 to 319, 320 to 342, 344 to 364, 365 to 389, 390 to 412, and 414 to 436; these read ENPL…AFGK, IQGL…IAGL, NLLE…IGLL, SKLK…ICHC, SLVV…GFEL, VKLE…IGEM, SLRY…SFGL, LTNL…SFGD, LISL…AFGT, and VNLT…VVKQ. The GVYW signature appears at 437–449; sequence GVDAVKMYMGKRW.

The protein belongs to the SHOC2 family. Widely expressed.

Functionally, leucine-rich repeat protein that likely mediates protein interactions, possibly in the context of signal transduction. PIRL1 acts redundantly with PIRL9 in the differentiation of microspores into pollen. This chain is Plant intracellular Ras-group-related LRR protein 1 (PIRL1), found in Arabidopsis thaliana (Mouse-ear cress).